An 89-amino-acid chain; its full sequence is Small ribosomal subunit protein uS15 (89 aa).

Belongs to the universal ribosomal protein uS15 family. In terms of assembly, part of the 30S ribosomal subunit. Forms a bridge to the 50S subunit in the 70S ribosome, contacting the 23S rRNA.

One of the primary rRNA binding proteins, it binds directly to 16S rRNA where it helps nucleate assembly of the platform of the 30S subunit by binding and bridging several RNA helices of the 16S rRNA. Its function is as follows. Forms an intersubunit bridge (bridge B4) with the 23S rRNA of the 50S subunit in the ribosome. This is Small ribosomal subunit protein uS15 from Thermodesulfovibrio yellowstonii (strain ATCC 51303 / DSM 11347 / YP87).